We begin with the raw amino-acid sequence, 485 residues long: Glutamyl-tRNA(Gln) amidotransferase subunit A (485 aa).

Catalysis depends on charge relay system residues Lys76 and Ser151. Ser175 serves as the catalytic Acyl-ester intermediate.

It belongs to the amidase family. GatA subfamily. As to quaternary structure, heterotrimer of A, B and C subunits.

The catalysed reaction is L-glutamyl-tRNA(Gln) + L-glutamine + ATP + H2O = L-glutaminyl-tRNA(Gln) + L-glutamate + ADP + phosphate + H(+). In terms of biological role, allows the formation of correctly charged Gln-tRNA(Gln) through the transamidation of misacylated Glu-tRNA(Gln) in organisms which lack glutaminyl-tRNA synthetase. The reaction takes place in the presence of glutamine and ATP through an activated gamma-phospho-Glu-tRNA(Gln). The protein is Glutamyl-tRNA(Gln) amidotransferase subunit A of Thiobacillus denitrificans (strain ATCC 25259 / T1).